A 429-amino-acid chain; its full sequence is Enolase (429 aa).

Glutamine 163 lines the (2R)-2-phosphoglycerate pocket. Glutamate 205 (proton donor) is an active-site residue. Aspartate 242, glutamate 285, and aspartate 312 together coordinate Mg(2+). (2R)-2-phosphoglycerate-binding residues include lysine 337, arginine 366, serine 367, and lysine 388. Lysine 337 functions as the Proton acceptor in the catalytic mechanism.

The protein belongs to the enolase family. Mg(2+) is required as a cofactor.

It localises to the cytoplasm. The protein resides in the secreted. It is found in the cell surface. It catalyses the reaction (2R)-2-phosphoglycerate = phosphoenolpyruvate + H2O. The protein operates within carbohydrate degradation; glycolysis; pyruvate from D-glyceraldehyde 3-phosphate: step 4/5. Functionally, catalyzes the reversible conversion of 2-phosphoglycerate (2-PG) into phosphoenolpyruvate (PEP). It is essential for the degradation of carbohydrates via glycolysis. The polypeptide is Enolase (Oceanobacillus iheyensis (strain DSM 14371 / CIP 107618 / JCM 11309 / KCTC 3954 / HTE831)).